A 441-amino-acid polypeptide reads, in one-letter code: ATP-dependent RNA helicase sub2 (441 aa).

Over residues 19-29 (DAAATTAAPAA) the composition is skewed to low complexity. Positions 19–43 (DAAATTAAPAANGAQDKKGDLTVSG) are disordered. The short motif at 58-86 (TGFRDFLLKGELLRAITDCGFEHPSEVQQ) is the Q motif element. The region spanning 89-264 (IPTAILNVDV…KKFMRNPLEV (176 aa)) is the Helicase ATP-binding domain. 102–109 (AKSGLGKT) provides a ligand contact to ATP. The DEAD box signature appears at 211–214 (DECD). The Helicase C-terminal domain maps to 276 to 437 (GLQQYYIKLS…EYPEGGVDSS (162 aa)).

This sequence belongs to the DEAD box helicase family. DECD subfamily.

It localises to the nucleus. The enzyme catalyses ATP + H2O = ADP + phosphate + H(+). Its function is as follows. ATP-binding RNA helicase involved in transcription elongation and required for the export of mRNA out of the nucleus. SUB2 also plays a role in pre-mRNA splicing and spliceosome assembly. May be involved in rDNA and telomeric silencing, and maintenance of genome integrity. In Neosartorya fischeri (strain ATCC 1020 / DSM 3700 / CBS 544.65 / FGSC A1164 / JCM 1740 / NRRL 181 / WB 181) (Aspergillus fischerianus), this protein is ATP-dependent RNA helicase sub2 (sub2).